A 503-amino-acid chain; its full sequence is Ell-associated factor Eaf (503 aa).

2 stretches are compositionally biased toward polar residues: residues 119–145 and 167–186; these read TRNE…NQGA and ENST…SRRN. Disordered regions lie at residues 119-220, 250-360, and 372-503; these read TRNE…PAWD, GHAN…SQSV, and GGVL…DDDD. Position 196 is a phosphoserine (S196). Residues 202 to 215 are compositionally biased toward low complexity; that stretch reads SPSRPVPVHRSPQS. 2 stretches are compositionally biased toward polar residues: residues 250–273 and 298–307; these read GHAN…STHI and MAQQQQQHPS. Low complexity predominate over residues 308–337; it reads NYGRGYNGGHNHAQQQQQQQRNSPPRQRPS. Over residues 385–400 the composition is skewed to acidic residues; it reads DSSDSDSGSDSDDSTE. 3 stretches are compositionally biased toward low complexity: residues 406–437, 454–472, and 487–497; these read QGQQ…HHNQ, HQQQ…QKQQ, and LQNDLQLSSNS.

The protein belongs to the EAF family.

Its subcellular location is the nucleus. Its function is as follows. Promotes transcriptional elongation by Su(Tpl)/ELL. Essential for development. The polypeptide is Ell-associated factor Eaf (Drosophila sechellia (Fruit fly)).